The following is a 1762-amino-acid chain: Lysine-specific demethylase 3B (1762 aa).

Alanine 2 carries the N-acetylalanine modification. 2 disordered regions span residues 253–350 (MDSS…FVPQ) and 426–468 (TTAS…NSSL). The span at 299–310 (ATKKLKGDRGEV) shows a compositional bias: basic and acidic residues. Residues 426–435 (TTASSTPTTV) show a composition bias toward low complexity. A compositionally biased stretch (polar residues) spans 453-465 (GSWSQASGENSRN). 4 positions are modified to phosphoserine: serine 493, serine 547, serine 557, and serine 561. The tract at residues 574–613 (SVLGADTQPGPKAGSSVDRKVPAESMPTLTPAFPRSLLNT) is disordered. Threonine 615 is subject to Phosphothreonine. Polar residues predominate over residues 713 to 746 (TGSPSLSAVGNGRSSSPTNSLTQPIEMPTLSSSP). The segment at 713-763 (TGSPSLSAVGNGRSSSPTNSLTQPIEMPTLSSSPTEERPTVGPGQQDNPLL) is disordered. Residues serine 767, serine 774, and serine 779 each carry the phosphoserine modification. Lysine 789 is covalently cross-linked (Glycyl lysine isopeptide (Lys-Gly) (interchain with G-Cter in SUMO2)). Residue serine 799 is modified to Phosphoserine. The disordered stretch occupies residues 806–853 (ACRQDSDSSTNSDLSDLSDSEEQLQAKSGLKGIPEHLMGKLGPNGERS). The segment at 1032–1057 (CDVCETTLFNIHWVCRKCGFGVCLDC) adopts a C6-type zinc-finger fold. The segment covering 1146–1163 (QLPSVTPSASSGNETTFS) has biased composition (polar residues). Positions 1146–1217 (QLPSVTPSAS…AIRPPCPDTA (72 aa)) are disordered. Residues serine 1254 and serine 1260 each carry the phosphoserine modification. The interval 1285–1306 (SNSKTEGSSLRDLLHSGPGKLP) is disordered. Residues 1294-1298 (LRDLL) carry the LXXLL motif motif. The JmjC domain occupies 1499–1722 (MPTRFEDLME…HCFRLTQEFR (224 aa)). Fe cation-binding residues include histidine 1561, aspartate 1563, and histidine 1690.

The protein belongs to the JHDM2 histone demethylase family. The cofactor is Fe(2+).

The protein resides in the nucleus. It carries out the reaction N(6),N(6)-dimethyl-L-lysyl(9)-[histone H3] + 2 2-oxoglutarate + 2 O2 = L-lysyl(9)-[histone H3] + 2 formaldehyde + 2 succinate + 2 CO2. Functionally, histone demethylase that specifically demethylates 'Lys-9' of histone H3, thereby playing a central role in histone code. Demethylation of Lys residue generates formaldehyde and succinate May have tumor suppressor activity. This chain is Lysine-specific demethylase 3B (Kdm3b), found in Mus musculus (Mouse).